Consider the following 329-residue polypeptide: Isoaspartyl peptidase/L-asparaginase (329 aa).

Thr173 functions as the Nucleophile in the catalytic mechanism. Substrate is bound by residues 201–204 (RVSD) and 222–225 (TGVG).

This sequence belongs to the Ntn-hydrolase family. Heterotetramer of two alpha and two beta chains arranged as a dimer of alpha/beta heterodimers. Cleaved into an alpha and beta chain by autocatalysis; this activates the enzyme. The N-terminal residue of the beta subunit is responsible for the nucleophile hydrolase activity.

It carries out the reaction Cleavage of a beta-linked Asp residue from the N-terminus of a polypeptide.. Degrades proteins damaged by L-isoaspartyl residue formation (also known as beta-Asp residues). Probably performs the final step in the degradation of the reserve polymer cyanophycin (depolymerizes the building block L-beta-Asp-Arg). Also has L-asparaginase activity. The protein is Isoaspartyl peptidase/L-asparaginase of Synechocystis sp. (strain ATCC 27184 / PCC 6803 / Kazusa).